A 259-amino-acid polypeptide reads, in one-letter code: Merozoite surface protein CMZ-8 (259 aa).

Positions 1 to 108 (PLPFSPPSTP…STPVSPPSSP (108 aa)) are enriched in pro residues. Disordered regions lie at residues 1–127 (PLPF…STSE) and 174–203 (RPGSSAADRRHCTRSTRSSRRMSRRHRHKG). Tandem repeats lie at residues 5 to 11 (SPPSTPV), 12 to 18 (SPPSTPV), 19 to 25 (SPPSTPV), 26 to 32 (SPPSTPV), 33 to 39 (SPPSTPV), 40 to 46 (SPPSTPV), 47 to 53 (SPPSTPV), 54 to 60 (SPPSTPV), 61 to 67 (SPPSTPV), 68 to 74 (SPPSTPV), 75 to 81 (SPPSTPV), 82 to 88 (SPPSTPV), 89 to 95 (SPPSTPV), 96 to 102 (SPPSTPV), and 103 to 109 (SPPSSPA). The segment at 5–109 (SPPSTPVSPP…TPVSPPSSPA (105 aa)) is 15 X 7 AA repeats of S-P-P-S-T-P-V. The segment covering 184-203 (HCTRSTRSSRRMSRRHRHKG) has biased composition (basic residues).

The protein is Merozoite surface protein CMZ-8 of Eimeria acervulina (Coccidian parasite).